A 996-amino-acid chain; its full sequence is Filament-like plant protein 5 (996 aa).

The interval 1 to 20 is disordered; the sequence is MEGRGWPWKRKSSDKATTEK. 4 coiled-coil regions span residues 59 to 94, 133 to 248, 280 to 301, and 359 to 387; these read THMSRMEDQVKLFEVQVKDLKEKLTLAHSEINTKES, TAED…KYDL, VKKIAKLEAECHRLRGLLRKKL, and LTRRTLEMEEEIQTLKEHLSARNNELQVS. 2 disordered regions span residues 409 to 482 and 496 to 534; these read NNDK…SSSR and VGSDPDGANSASKSSNSVCSRRSVEKQSSSKSSEPDEDT. The segment covering 417-428 has biased composition (low complexity); that stretch reads SNSRNLSESLSS. Polar residues predominate over residues 471-482; sequence VNGSSKPRSSSR. Positions 503–527 are enriched in low complexity; the sequence is ANSASKSSNSVCSRRSVEKQSSSKS. Coiled-coil stretches lie at residues 601-622, 737-841, and 876-906; these read QNSEKEQKNTKQQDLEAAVANI, DSSC…FTTE, and NQEKDIVSATEKLAACQETIHLLSQQLQSLQ. A disordered region spans residues 962-996; the sequence is IMKSSSVSSSSKEDNEKHTRGLGRFFSSKSKNSAR.

Belongs to the FPP family. Interacts with WPP/MAF proteins.

The sequence is that of Filament-like plant protein 5 (FPP5) from Arabidopsis thaliana (Mouse-ear cress).